An 893-amino-acid chain; its full sequence is Serine/threonine-protein kinase PLK4 (893 aa).

Positions 12 to 265 constitute a Protein kinase domain; sequence FRVGNLLGKG…LSSVLDHPFM (254 aa). ATP-binding positions include 18 to 26 and lysine 41; that span reads LGKGSFAGV. N6-acetyllysine is present on residues lysine 45 and lysine 46. The active-site Proton acceptor is the aspartate 136. Residues 349–358 show a composition bias toward polar residues; sequence NQEQETSNSG. The tract at residues 349-393 is disordered; it reads NQEQETSNSGRGRVIQEAEERPHSRYLRRAHSSDRSETSHGQSRV. Basic and acidic residues predominate over residues 362-371; it reads VIQEAEERPH. Residues serine 403 and serine 588 each carry the phosphoserine modification. The 114-residue stretch at 509–622 folds into the Cryptic POLO box 1 (CPB1) domain; that stretch reads TLRSITSPLT…SRFVQLVRSK (114 aa). The Cryptic POLO box 2 (CPB2) domain occupies 623-736; sequence SPKITYFTRY…GRRPSSTSSP (114 aa). The interval 730–749 is disordered; that stretch reads PSSTSSPKALTPPPPVDPNY. One can recognise a POLO box domain in the interval 809–887; that stretch reads QLLKSVFVKN…LSSILLMFSN (79 aa).

This sequence belongs to the protein kinase superfamily. Ser/Thr protein kinase family. CDC5/Polo subfamily. In terms of assembly, homodimer. Interacts with CEP152 (via N-terminus). Interacts with CEP78; this interaction may be important for proper PLK4 localization to the centriole and PLK4-induced overduplication of centrioles. Interacts with CEP131. Interacts simultaneously with TENT5C and CEP192. Interacts with TENT5C; this interaction leads to the TENT5C recruitment in the centrosome. Interacts with CEP85; this interaction may be important in cell migration and centriole assembly. Post-translationally, ubiquitinated; leading to its degradation by the proteasome. In terms of processing, tyrosine-phosphorylated by TEC. Acetylation by KAT2A and KAT2B impairs kinase activity by shifting the kinase to an inactive conformation.

The protein resides in the cytoplasm. The protein localises to the cytoskeleton. It is found in the microtubule organizing center. Its subcellular location is the centrosome. It localises to the centriole. The protein resides in the nucleus. The protein localises to the nucleolus. It is found in the cleavage furrow. The enzyme catalyses L-seryl-[protein] + ATP = O-phospho-L-seryl-[protein] + ADP + H(+). It carries out the reaction L-threonyl-[protein] + ATP = O-phospho-L-threonyl-[protein] + ADP + H(+). In terms of biological role, serine/threonine-protein kinase that plays a central role in centriole duplication. Able to trigger procentriole formation on the surface of the parental centriole cylinder, leading to the recruitment of centriole biogenesis proteins such as SASS6, CPAP, CCP110, CEP135 and gamma-tubulin. When overexpressed, it is able to induce centrosome amplification through the simultaneous generation of multiple procentrioles adjoining each parental centriole during S phase. Phosphorylates 'Ser-151' of FBXW5 during the G1/S transition, leading to inhibit FBXW5 ability to ubiquitinate SASS6. Its central role in centriole replication suggests a possible role in tumorigenesis, centrosome aberrations being frequently observed in tumors. Also involved in deuterosome-mediated centriole amplification in multiciliated that can generate more than 100 centrioles. Also involved in trophoblast differentiation by phosphorylating HAND1, leading to disrupt the interaction between HAND1 and MDFIC and activate HAND1. Phosphorylates CDC25C and CHEK2. Required for the recruitment of STIL to the centriole and for STIL-mediated centriole amplification. Phosphorylates CEP131 and PCM1 which is essential for proper organization and integrity of centriolar satellites. This chain is Serine/threonine-protein kinase PLK4, found in Bos taurus (Bovine).